The primary structure comprises 138 residues: Venom allergen 2 (138 aa).

Positions 1-19 are cleaved as a signal peptide; the sequence is MKSFVLATCLLGFAQIIYA. Cystine bridges form between cysteine 34–cysteine 57, cysteine 81–cysteine 94, and cysteine 101–cysteine 122.

It belongs to the ant venom allergen 2/4 family. In terms of assembly, homodimer; disulfide-linked. As to expression, expressed by the venom gland.

Its subcellular location is the secreted. This is Venom allergen 2 from Solenopsis invicta (Red imported fire ant).